Consider the following 327-residue polypeptide: 7,8-didemethyl-8-hydroxy-5-deazariboflavin synthase (327 aa).

Residues 6–244 (ITFSRNVFLP…EEVAVQVAPN (239 aa)) enclose the Radical SAM core domain. Cys-20, Cys-24, and Cys-27 together coordinate [4Fe-4S] cluster.

This sequence belongs to the radical SAM superfamily. CofG family. In terms of assembly, consists of two subunits, CofG and CofH. It depends on [4Fe-4S] cluster as a cofactor.

It carries out the reaction 5-amino-5-(4-hydroxybenzyl)-6-(D-ribitylimino)-5,6-dihydrouracil + S-adenosyl-L-methionine = 7,8-didemethyl-8-hydroxy-5-deazariboflavin + 5'-deoxyadenosine + L-methionine + NH4(+) + H(+). It participates in cofactor biosynthesis; coenzyme F0 biosynthesis. Functionally, catalyzes the radical-mediated synthesis of 7,8-didemethyl-8-hydroxy-5-deazariboflavin from 5-amino-5-(4-hydroxybenzyl)-6-(D-ribitylimino)-5,6-dihydrouracil. The protein is 7,8-didemethyl-8-hydroxy-5-deazariboflavin synthase of Methanosphaerula palustris (strain ATCC BAA-1556 / DSM 19958 / E1-9c).